The chain runs to 355 residues: Probable NADPH-dependent quinone reductase tdiC (355 aa).

Belongs to the zinc-containing alcohol dehydrogenase family. Requires NADPH as cofactor.

It functions in the pathway secondary metabolite biosynthesis. Functionally, probable NADPH-dependent quinone reductase; part of the gene cluster that mediates the biosynthesis of terrequinone A, an antitumor agent. The first step in the biosynthetic pathway for terrequinone A is formation of indole pyruvic acid (IPA) from L-tryptophan by the aminotransferase tdiD. The nonribosomal peptide synthase tdiA then immediately converts unstable IPA to didemethylasterriquinone D (DDAQ D), via condensation of 2 IPA molecules. The symmetric connectivity of the 2 IPA molecules is thought to arise by head-to-tail dual Claisen condensations facilitated by the TE domain. TdiB then catalyzes reverse prenylation by transferring dimethylallyl diphosphate to carbon atom 2' of DDAQ D, to yield asterriquinone C-1. Finally, tdiC and tdiE enzymes robustly convert asterriquinone C-1 to terrequinone A via a transformation involving regular prenylation at carbon atom 5, which requires elimination of the hydroxy group on C-5. The polypeptide is Probable NADPH-dependent quinone reductase tdiC (Emericella nidulans (strain FGSC A4 / ATCC 38163 / CBS 112.46 / NRRL 194 / M139) (Aspergillus nidulans)).